The primary structure comprises 257 residues: 4-chloro-allylglycine synthase (257 aa).

Residues Glu-112, His-119, Glu-173, His-203, Glu-207, and His-210 each coordinate Fe cation.

Fe(2+) is required as a cofactor.

It carries out the reaction 4-chloro-L-lysine + AH2 + O2 = L-2-amino-4-chloropent-4-enoate + formaldehyde + A + NH4(+) + H2O. It functions in the pathway amino-acid metabolism. It participates in antibiotic biosynthesis. Its function is as follows. Involved in the biosynthesis of terminal alkyne-containing amino acids such as L-propargylglycine (Pra) and L-beta-ethynylserine, that are produced as antibiotics by S.cattleya. Catalyzes an oxidative C-C bond cleavage in 4-chloro-L-lysine to form 4-chloro-allyl-L-glycine (also named L-2-amino-4-chloropent-4-enoate), with release of formaldehyde and ammonia. Is also able to react with L-lysine directly to produce allylglycine in vitro. The protein is 4-chloro-allylglycine synthase of Streptantibioticus cattleyicolor (strain ATCC 35852 / DSM 46488 / JCM 4925 / NBRC 14057 / NRRL 8057) (Streptomyces cattleya).